The primary structure comprises 66 residues: Beta-toxin Ct71 (66 aa).

The LCN-type CS-alpha/beta domain occupies 1 to 66 (KEGYIVNYHD…VWPLPKKTCN (66 aa)). 4 cysteine pairs are disulfide-bonded: cysteine 12–cysteine 65, cysteine 16–cysteine 41, cysteine 25–cysteine 46, and cysteine 29–cysteine 48. Asparagine amide is present on asparagine 66.

It belongs to the long (4 C-C) scorpion toxin superfamily. Sodium channel inhibitor family. Beta subfamily. As to expression, expressed by the venom gland.

The protein localises to the secreted. In terms of biological role, beta toxins bind voltage-independently at site-4 of sodium channels (Nav) and shift the voltage of activation toward more negative potentials thereby affecting sodium channel activation and promoting spontaneous and repetitive firing. Lethal to mice. This Centruroides tecomanus (Scorpion) protein is Beta-toxin Ct71.